We begin with the raw amino-acid sequence, 201 residues long: Casparian strip membrane protein 4 (201 aa).

The tract at residues 1–23 is disordered; that stretch reads MEGKAAVTTSTEHGDGEASRTAA. The Cytoplasmic portion of the chain corresponds to 1–41; the sequence is MEGKAAVTTSTEHGDGEASRTAARTVVSGSSRGGAASRALS. Residues 42-62 form a helical membrane-spanning segment; it reads VADLILRVVAVVAIVDSAIAM. Residues 63 to 87 lie on the Extracellular side of the membrane; that stretch reads GTTNQTLPFFTQFLRFKAQYSDLPT. N-linked (GlcNAc...) asparagine glycosylation occurs at N66. A helical membrane pass occupies residues 88–108; the sequence is LTLFVVANSAVTAYLVLSIPL. The Cytoplasmic portion of the chain corresponds to 109–122; the sequence is SVVHIIRSRASYSR. Residues 123–143 traverse the membrane as a helical segment; the sequence is LVLIFLDSVMLALVAAVASAS. Residues 144 to 172 are Extracellular-facing; sequence AAIVYLAHKGNVRANWFAVCQQFDSFCER. Residues 173-193 form a helical membrane-spanning segment; sequence ISGPLIGSFAAMAVLLLLVLL. Topologically, residues 194–201 are cytoplasmic; it reads SAAALARR.

It belongs to the Casparian strip membrane proteins (CASP) family. As to quaternary structure, homodimer and heterodimers.

It localises to the cell membrane. In terms of biological role, regulates membrane-cell wall junctions and localized cell wall deposition. Required for establishment of the Casparian strip membrane domain (CSD) and the subsequent formation of Casparian strips, a cell wall modification of the root endodermis that determines an apoplastic barrier between the intraorganismal apoplasm and the extraorganismal apoplasm and prevents lateral diffusion. In Oryza sativa subsp. japonica (Rice), this protein is Casparian strip membrane protein 4.